Consider the following 257-residue polypeptide: Zinc transporter ZupT (257 aa).

Transmembrane regions (helical) follow at residues Leu5–Gly25, Val32–Met52, and Gly61–Leu81. Fe(2+)-binding residues include Asn120 and Glu123. Residues Glu123 and His148 each coordinate Zn(2+). Fe(2+) is bound by residues Asn149, Glu152, and Glu181. Glu152 is a Zn(2+) binding site. 3 consecutive transmembrane segments (helical) span residues Ile182 to Ala202, Ala203 to Leu223, and Gly236 to Ile256.

It belongs to the ZIP transporter (TC 2.A.5) family. ZupT subfamily.

The protein localises to the cell inner membrane. The catalysed reaction is Zn(2+)(in) = Zn(2+)(out). In terms of biological role, mediates zinc uptake. May also transport other divalent cations. In Salmonella arizonae (strain ATCC BAA-731 / CDC346-86 / RSK2980), this protein is Zinc transporter ZupT.